Consider the following 542-residue polypeptide: GMP synthase [glutamine-hydrolyzing] (542 aa).

The Glutamine amidotransferase type-1 domain occupies 28 to 218; sequence MIVILDFGSQ…VYHICECEPT (191 aa). The active-site Nucleophile is cysteine 105. Residues histidine 192 and glutamate 194 contribute to the active site. The GMPS ATP-PPase domain occupies 219–417; it reads WTTEAFVDET…IGLPEEIVRR (199 aa). 246 to 252 lines the ATP pocket; sequence SGGVDSS.

Homodimer.

It catalyses the reaction XMP + L-glutamine + ATP + H2O = GMP + L-glutamate + AMP + diphosphate + 2 H(+). It participates in purine metabolism; GMP biosynthesis; GMP from XMP (L-Gln route): step 1/1. In terms of biological role, catalyzes the synthesis of GMP from XMP. This chain is GMP synthase [glutamine-hydrolyzing], found in Crocosphaera subtropica (strain ATCC 51142 / BH68) (Cyanothece sp. (strain ATCC 51142)).